Here is a 377-residue protein sequence, read N- to C-terminus: MKILIDENMPYAEALFSQLGEVTMKSGRTLTADDLVDVDALMIRSVTKVNESLISKANKLKFVGTATAGMDHVDQELMKERGIFFTAAPGCNKVGVAEYAFSAMMVLAQQQGFSVFEKTVGIIGCGQVGSYLAKCLEGIGIKVLLNDPLKQQEGDTREFTELDTLLEQSDVITLHTPITKTGEFPTHHLINEQVLNNLRADQILINAARGPVVDNQALKARLQKADGFTAVLDVFEFEPEVDFELLPLLAFTTPHVAGYGLEGKARGTTMIFNSYCEFLGTEQRAYASDLLPTAPVPKMKLDRAWDEATLHNLTQLIYDVRKDDALFRRNISTPGSFDKMRKEYWDRREYSAVELTGDESCNLTPLSKLGFMVKPTL.

Ser45 and Thr67 together coordinate substrate. NAD(+) is bound by residues 127–128 (QV), Asp147, and Thr176. Arg209 is a catalytic residue. Asp233 contributes to the NAD(+) binding site. Residue Glu238 is part of the active site. Residue His255 is the Proton donor of the active site. Gly258 serves as a coordination point for NAD(+). Substrate is bound at residue Tyr259.

The protein belongs to the D-isomer specific 2-hydroxyacid dehydrogenase family. PdxB subfamily. Homodimer.

It is found in the cytoplasm. The catalysed reaction is 4-phospho-D-erythronate + NAD(+) = (R)-3-hydroxy-2-oxo-4-phosphooxybutanoate + NADH + H(+). It functions in the pathway cofactor biosynthesis; pyridoxine 5'-phosphate biosynthesis; pyridoxine 5'-phosphate from D-erythrose 4-phosphate: step 2/5. Catalyzes the oxidation of erythronate-4-phosphate to 3-hydroxy-2-oxo-4-phosphonooxybutanoate. This is Erythronate-4-phosphate dehydrogenase from Vibrio atlanticus (strain LGP32) (Vibrio splendidus (strain Mel32)).